Reading from the N-terminus, the 325-residue chain is Cytochrome c1, heme protein, mitochondrial (325 aa).

The N-terminal 84 residues, 1–84 (MAAAAASLRG…AMALHSAVSA (84 aa)), are a transit peptide targeting the mitochondrion. At 85–281 (SDLELHPPSY…TFLRWASEPE (197 aa)) the chain is on the mitochondrial intermembrane side. Positions 108–209 (TSIRRGFQVY…IVRARHGGED (102 aa)) constitute a Cytochrome c domain. 3 residues coordinate heme c: cysteine 121, cysteine 124, and histidine 125. A Phosphoserine modification is found at serine 182. Residue methionine 244 participates in heme c binding. A helical membrane pass occupies residues 282–315 (HDHRKRMGLKMLMMMALLVPLVYTIKRHKWSVLK). The Mitochondrial matrix segment spans residues 316–325 (SRKLAYRPPK).

This sequence belongs to the cytochrome c family. As to quaternary structure, component of the ubiquinol-cytochrome c oxidoreductase (cytochrome b-c1 complex, complex III, CIII), a multisubunit enzyme composed of 11 subunits. The complex is composed of 3 respiratory subunits cytochrome b, cytochrome c1 and Rieske protein UQCRFS1, 2 core protein subunits UQCRC1/QCR1 and UQCRC2/QCR2, and 6 low-molecular weight protein subunits UQCRH/QCR6, UQCRB/QCR7, UQCRQ/QCR8, UQCR10/QCR9, UQCR11/QCR10 and subunit 9, the cleavage product of Rieske protein UQCRFS1. The complex exists as an obligatory dimer and forms supercomplexes (SCs) in the inner mitochondrial membrane with NADH-ubiquinone oxidoreductase (complex I, CI) and cytochrome c oxidase (complex IV, CIV), resulting in different assemblies (supercomplex SCI(1)III(2)IV(1) and megacomplex MCI(2)III(2)IV(2)). Interacts with FLVCR2; this interaction occurs in the absence of heme and is disrupted upon heme binding. It depends on heme c as a cofactor.

Its subcellular location is the mitochondrion inner membrane. The catalysed reaction is a quinol + 2 Fe(III)-[cytochrome c](out) = a quinone + 2 Fe(II)-[cytochrome c](out) + 2 H(+)(out). In terms of biological role, component of the ubiquinol-cytochrome c oxidoreductase, a multisubunit transmembrane complex that is part of the mitochondrial electron transport chain which drives oxidative phosphorylation. The respiratory chain contains 3 multisubunit complexes succinate dehydrogenase (complex II, CII), ubiquinol-cytochrome c oxidoreductase (cytochrome b-c1 complex, complex III, CIII) and cytochrome c oxidase (complex IV, CIV), that cooperate to transfer electrons derived from NADH and succinate to molecular oxygen, creating an electrochemical gradient over the inner membrane that drives transmembrane transport and the ATP synthase. The cytochrome b-c1 complex catalyzes electron transfer from ubiquinol to cytochrome c, linking this redox reaction to translocation of protons across the mitochondrial inner membrane, with protons being carried across the membrane as hydrogens on the quinol. In the process called Q cycle, 2 protons are consumed from the matrix, 4 protons are released into the intermembrane space and 2 electrons are passed to cytochrome c. Cytochrome c1 is a catalytic core subunit containing a c-type heme. It transfers electrons from the [2Fe-2S] iron-sulfur cluster of the Rieske protein to cytochrome c. The sequence is that of Cytochrome c1, heme protein, mitochondrial (CYC1) from Homo sapiens (Human).